Reading from the N-terminus, the 231-residue chain is 4-hydroxy-tetrahydrodipicolinate reductase (231 aa).

NAD(+) is bound by residues Asp-33, 68–70 (CTT), and 92–95 (SSNT). His-124 serves as the catalytic Proton donor/acceptor. His-125 is a (S)-2,3,4,5-tetrahydrodipicolinate binding site. The active-site Proton donor is Lys-128. 134-135 (GT) contributes to the (S)-2,3,4,5-tetrahydrodipicolinate binding site.

Belongs to the DapB family.

It localises to the cytoplasm. The catalysed reaction is (S)-2,3,4,5-tetrahydrodipicolinate + NAD(+) + H2O = (2S,4S)-4-hydroxy-2,3,4,5-tetrahydrodipicolinate + NADH + H(+). The enzyme catalyses (S)-2,3,4,5-tetrahydrodipicolinate + NADP(+) + H2O = (2S,4S)-4-hydroxy-2,3,4,5-tetrahydrodipicolinate + NADPH + H(+). Its pathway is amino-acid biosynthesis; L-lysine biosynthesis via DAP pathway; (S)-tetrahydrodipicolinate from L-aspartate: step 4/4. Functionally, catalyzes the conversion of 4-hydroxy-tetrahydrodipicolinate (HTPA) to tetrahydrodipicolinate. The chain is 4-hydroxy-tetrahydrodipicolinate reductase from Brachyspira hyodysenteriae (strain ATCC 49526 / WA1).